A 240-amino-acid chain; its full sequence is MADLILSSSSAQSSLLHVRPNHYLLNTSTASPIRSVRFQNSNGFHPLAFASGHRRLPLGAVVPSDSTKTITSTITANCVDSGVKAVEVEPTIDYGGGGGIGGDKFGGGGGGGDGNDDGGEDDKEESDGKKSTPLSMSQKLTLGYAFLVGVGGLMGYLKSGSQKSLLAGGLSAAVLLYVFSQLPTKPVLASTVGVVMAGALMYVMGTRYMRSKKIFPAGVVSIMSFIMTGGYIHGIMRSLH.

A chloroplast-targeting transit peptide spans 1–84; the sequence is MADLILSSSS…TANCVDSGVK (84 aa). Over residues 97 to 113 the composition is skewed to gly residues; the sequence is GGGIGGDKFGGGGGGGD. The interval 97–134 is disordered; it reads GGGIGGDKFGGGGGGGDGNDDGGEDDKEESDGKKSTPL. The segment covering 114–125 has biased composition (acidic residues); sequence GNDDGGEDDKEE. Transmembrane regions (helical) follow at residues 164-184, 186-206, and 214-234; these read SLLA…QLPT, PVLA…VMGT, and IFPA…YIHG.

This sequence belongs to the TMEM14 family.

It is found in the plastid. Its subcellular location is the chloroplast membrane. In terms of biological role, may be involved in free fatty acids export from the plastids. The chain is Protein FATTY ACID EXPORT 2, chloroplastic from Arabidopsis thaliana (Mouse-ear cress).